Here is a 295-residue protein sequence, read N- to C-terminus: Cytidine deaminase (295 aa).

2 consecutive CMP/dCMP-type deaminase domains span residues 48–168 and 187–295; these read TDNQ…FGPS and EDDD…YLSL. A substrate-binding site is contributed by 89-91; sequence NME. His-102 is a Zn(2+) binding site. The active-site Proton donor is the Glu-104. Positions 129 and 132 each coordinate Zn(2+).

Belongs to the cytidine and deoxycytidylate deaminase family. In terms of assembly, homodimer. Zn(2+) serves as cofactor.

The catalysed reaction is cytidine + H2O + H(+) = uridine + NH4(+). It catalyses the reaction 2'-deoxycytidine + H2O + H(+) = 2'-deoxyuridine + NH4(+). Its function is as follows. This enzyme scavenges exogenous and endogenous cytidine and 2'-deoxycytidine for UMP synthesis. The chain is Cytidine deaminase from Vibrio vulnificus (strain YJ016).